The primary structure comprises 87 residues: Cytochrome c6 (87 aa).

Residues Cys14, Cys17, His18, and Met58 each coordinate heme c.

This sequence belongs to the cytochrome c family. PetJ subfamily. Monomer. Binds 1 heme c group covalently per subunit.

It localises to the cellular thylakoid lumen. Its function is as follows. Functions as an electron carrier between membrane-bound cytochrome b6-f and photosystem I in oxygenic photosynthesis. The sequence is that of Cytochrome c6 (petJ) from Synechococcus elongatus.